The primary structure comprises 397 residues: 2-deoxy-scyllo-inosose synthase (397 aa).

Residues D41, 71-74 (EPYK), 103-107 (GVIGN), 127-128 (TS), 138-140 (SLK), and 149-150 (KN) contribute to the NAD(+) site. K140 is an active-site residue. E182 provides a ligand contact to Co(2+). Residue E242 is part of the active site. Positions 245 and 261 each coordinate Co(2+).

This sequence belongs to the sugar phosphate cyclases superfamily. DOI synthase family. NAD(+) is required as a cofactor. Requires Co(2+) as cofactor.

It carries out the reaction D-glucose 6-phosphate = 2-deoxy-L-scyllo-inosose + phosphate. It functions in the pathway metabolic intermediate biosynthesis; 2-deoxystreptamine biosynthesis; 2-deoxystreptamine from D-glucose 6-phosphate: step 1/4. It participates in antibiotic biosynthesis; gentamicin biosynthesis. Functionally, catalyzes the intramolecular carbocycle formation from D-glucose-6-phosphate to 2-deoxy-scyllo-inosose (DOI). This is 2-deoxy-scyllo-inosose synthase (gtmA) from Micromonospora echinospora (Micromonospora purpurea).